A 283-amino-acid polypeptide reads, in one-letter code: Protoheme IX farnesyltransferase 1 (283 aa).

A run of 9 helical transmembrane segments spans residues 14 to 34 (IALMIALTAITGYGAVATKVD), 35 to 55 (PVALLLLTLAMILGSAASAVF), 84 to 104 (LGFALAVVLMVAGMALANAAF), 107 to 127 (VVALHLFLGGFVYVAIYTVWL), 133 to 153 (TNIIIGGAAGSFAVLAGAAAV), 163 to 183 (VLALVLFLWTPSHFWSLAILL), 208 to 228 (ILANTVILVGASLLPWGLGLL), 231 to 251 (VYGFVAAVSGAVLLGFNVVLV), and 258 to 278 (WAGWNFAASMPYLLLLFIAVF).

Belongs to the UbiA prenyltransferase family. Protoheme IX farnesyltransferase subfamily.

Its subcellular location is the cell inner membrane. The catalysed reaction is heme b + (2E,6E)-farnesyl diphosphate + H2O = Fe(II)-heme o + diphosphate. It functions in the pathway porphyrin-containing compound metabolism; heme O biosynthesis; heme O from protoheme: step 1/1. In terms of biological role, converts heme B (protoheme IX) to heme O by substitution of the vinyl group on carbon 2 of heme B porphyrin ring with a hydroxyethyl farnesyl side group. This Paramagnetospirillum magneticum (strain ATCC 700264 / AMB-1) (Magnetospirillum magneticum) protein is Protoheme IX farnesyltransferase 1.